The chain runs to 286 residues: 4-hydroxy-3-methylbut-2-enyl diphosphate reductase (286 aa).

Cysteine 12 serves as a coordination point for [4Fe-4S] cluster. 2 residues coordinate (2E)-4-hydroxy-3-methylbut-2-enyl diphosphate: histidine 46 and histidine 79. Residues histidine 46 and histidine 79 each contribute to the dimethylallyl diphosphate site. 2 residues coordinate isopentenyl diphosphate: histidine 46 and histidine 79. Position 101 (cysteine 101) interacts with [4Fe-4S] cluster. Position 129 (histidine 129) interacts with (2E)-4-hydroxy-3-methylbut-2-enyl diphosphate. Histidine 129 contributes to the dimethylallyl diphosphate binding site. Residue histidine 129 coordinates isopentenyl diphosphate. The Proton donor role is filled by glutamate 131. Residue threonine 169 coordinates (2E)-4-hydroxy-3-methylbut-2-enyl diphosphate. Residue cysteine 198 coordinates [4Fe-4S] cluster. Positions 226, 228, and 270 each coordinate (2E)-4-hydroxy-3-methylbut-2-enyl diphosphate. Serine 226, asparagine 228, and serine 270 together coordinate dimethylallyl diphosphate. Isopentenyl diphosphate is bound by residues serine 226, asparagine 228, and serine 270.

This sequence belongs to the IspH family. [4Fe-4S] cluster is required as a cofactor.

The catalysed reaction is isopentenyl diphosphate + 2 oxidized [2Fe-2S]-[ferredoxin] + H2O = (2E)-4-hydroxy-3-methylbut-2-enyl diphosphate + 2 reduced [2Fe-2S]-[ferredoxin] + 2 H(+). It catalyses the reaction dimethylallyl diphosphate + 2 oxidized [2Fe-2S]-[ferredoxin] + H2O = (2E)-4-hydroxy-3-methylbut-2-enyl diphosphate + 2 reduced [2Fe-2S]-[ferredoxin] + 2 H(+). It functions in the pathway isoprenoid biosynthesis; dimethylallyl diphosphate biosynthesis; dimethylallyl diphosphate from (2E)-4-hydroxy-3-methylbutenyl diphosphate: step 1/1. Its pathway is isoprenoid biosynthesis; isopentenyl diphosphate biosynthesis via DXP pathway; isopentenyl diphosphate from 1-deoxy-D-xylulose 5-phosphate: step 6/6. Catalyzes the conversion of 1-hydroxy-2-methyl-2-(E)-butenyl 4-diphosphate (HMBPP) into a mixture of isopentenyl diphosphate (IPP) and dimethylallyl diphosphate (DMAPP). Acts in the terminal step of the DOXP/MEP pathway for isoprenoid precursor biosynthesis. The chain is 4-hydroxy-3-methylbut-2-enyl diphosphate reductase from Solidesulfovibrio magneticus (strain ATCC 700980 / DSM 13731 / RS-1) (Desulfovibrio magneticus).